A 141-amino-acid polypeptide reads, in one-letter code: Putative pre-16S rRNA nuclease (141 aa).

It belongs to the YqgF nuclease family.

The protein localises to the cytoplasm. In terms of biological role, could be a nuclease involved in processing of the 5'-end of pre-16S rRNA. The polypeptide is Putative pre-16S rRNA nuclease (Aliivibrio fischeri (strain MJ11) (Vibrio fischeri)).